Reading from the N-terminus, the 172-residue chain is Protein-export protein SecB (172 aa).

Residues 153-172 (AQGQGGDSGIVMPDGSQARH) form a disordered region.

The protein belongs to the SecB family. As to quaternary structure, homotetramer, a dimer of dimers. One homotetramer interacts with 1 SecA dimer.

Its subcellular location is the cytoplasm. Functionally, one of the proteins required for the normal export of preproteins out of the cell cytoplasm. It is a molecular chaperone that binds to a subset of precursor proteins, maintaining them in a translocation-competent state. It also specifically binds to its receptor SecA. The chain is Protein-export protein SecB from Cupriavidus metallidurans (strain ATCC 43123 / DSM 2839 / NBRC 102507 / CH34) (Ralstonia metallidurans).